A 950-amino-acid polypeptide reads, in one-letter code: Protocadherin alpha-9 (950 aa).

The first 29 residues, 1–29 (MLYSSRGDPEGQPLLLSLLILAMWVVGSG), serve as a signal peptide directing secretion. Cadherin domains lie at 30 to 133 (QLHY…PPVF), 134 to 242 (PATQ…APVF), 243 to 350 (DRTL…APQL), 351 to 455 (TIKT…APAF), 456 to 565 (AQPE…APAL), and 588 to 678 (GVVV…APKS). Residues 30–697 (QLHYSVPEEA…GPEVTLVDVN (668 aa)) are Extracellular-facing. Residues asparagine 254 and asparagine 265 are each glycosylated (N-linked (GlcNAc...) asparagine). Asparagine 548 carries an N-linked (GlcNAc...) asparagine glycan. The chain crosses the membrane as a helical span at residues 698-718 (VYLIIAICAVSSLLVLTLLLY). Over 719–950 (TVLRCSAMPT…GNSTTDNSDQ (232 aa)) the chain is Cytoplasmic. One copy of the PXXP 1 repeat lies at 734 to 737 (PGKP). The tract at residues 734–894 (PGKPTLVCSS…PDKFIIPGSP (161 aa)) is 5 X 4 AA repeats of P-X-X-P. Disordered stretches follow at residues 759–808 (CSGE…DWRY) and 827–950 (ILRA…NSDQ). The segment covering 789–798 (PSASSDSSGK) has biased composition (polar residues). PXXP repeat units lie at residues 799 to 802 (PRQP), 832 to 835 (PGGP), 873 to 876 (PGNP), and 891 to 894 (PGSP). Residues 909–923 (DKSDFITFGKKEETK) show a composition bias toward basic and acidic residues.

The protein resides in the cell membrane. In terms of biological role, potential calcium-dependent cell-adhesion protein. May be involved in the establishment and maintenance of specific neuronal connections in the brain. The protein is Protocadherin alpha-9 (PCDHA9) of Pan troglodytes (Chimpanzee).